The following is a 427-amino-acid chain: MAEQDVENDLLDYDEEEEPQAPQESTPAPPKKDIKGSYVSIHSSGFRDFLLKPELLRAIVDCGFEHPSEVQHECIPQAILGMDVLCQAKSGMGKTAVFVLATLQQIEPVNGQVTVLVMCHTRELAFQISKEYERFSKYMPSVKVSVFFGGLSIKKDEEVLKKNCPHVVVGTPGRILALVRNRSFSLKNVKHFVLDECDKMLEQLDMRRDVQEIFRLTPHEKQCMMFSATLSKDIRPVCRKFMQDPMEVFVDDETKLTLHGLQQYYVKLKDSEKNRKLFDLLDVLEFNQVIIFVKSVQRCMALAQLLVEQNFPAIAIHRGMAQEERLSRYQQFKDFQRRILVATNLFGRGMDIERVNIVFNYDMPEDSDTYLHRVARAGRFGTKGLAITFVSDENDAKILNDVQDRFEVNVAELPEEIDISTYIEQSR.

Acidic residues predominate over residues 1 to 19 (MAEQDVENDLLDYDEEEEP). The tract at residues 1-34 (MAEQDVENDLLDYDEEEEPQAPQESTPAPPKKDI) is disordered. The residue at position 2 (A2) is an N-acetylalanine. A Glycyl lysine isopeptide (Lys-Gly) (interchain with G-Cter in SUMO2) cross-link involves residue K31. K35 is modified (N6-acetyllysine; alternate). K35 is covalently cross-linked (Glycyl lysine isopeptide (Lys-Gly) (interchain with G-Cter in SUMO2); alternate). Phosphoserine is present on S37. Residues 44 to 72 (SGFRDFLLKPELLRAIVDCGFEHPSEVQH) carry the Q motif motif. Residues 75–248 (IPQAILGMDV…RKFMQDPMEV (174 aa)) enclose the Helicase ATP-binding domain. ATP is bound at residue 88-95 (AKSGMGKT). Residues K154 and K162 each participate in a glycyl lysine isopeptide (Lys-Gly) (interchain with G-Cter in SUMO2) cross-link. A Phosphothreonine modification is found at T171. The short motif at 195–198 (DECD) is the DECD box element. Residues K240 and K255 each participate in a glycyl lysine isopeptide (Lys-Gly) (interchain with G-Cter in SUMO2) cross-link. The Helicase C-terminal domain maps to 260–421 (GLQQYYVKLK…ELPEEIDIST (162 aa)). S426 carries the post-translational modification Phosphoserine.

It belongs to the DEAD box helicase family. DECD subfamily. As to quaternary structure, binds ALYREF/THOC4 and DDX39B/BAT1. Interacts with the apo-AREX complex component SARNP. Interacts with MX1. Interacts with MCM3AP isoform GANP. Interacts with ECD. Interacts with PHAX; this interaction stimulates PHAX RNA binding activity. (Microbial infection) Interacts with human cytomegalovirus/HHV-5 protein UL69. Post-translationally, SUMOylated by RANBP2; SUMOylation modification affects its ability to bind RNA. Detected in testis, and at lower levels in brain, kidney, lung, thymus, spleen and salivary gland.

The protein resides in the nucleus. Its subcellular location is the cytoplasm. The catalysed reaction is ATP + H2O = ADP + phosphate + H(+). In terms of biological role, helicase that plays an essential role in mRNA export and is involved in multiple steps in RNA metabolism including alternative splicing. Regulates nuclear mRNA export to the cytoplasm through association with ECD. Also involved in spliceosomal uridine-rich small nuclear RNA (U snRNA) export by stimulating the RNA binding of adapter PHAX. Plays a role in the negative regulation of type I IFN production by increasing the nuclear retention of antiviral transcripts and thus reducing their protein expression. Independently of the interferon pathway, plays an antiviral role against alphaviruses by binding to a 5' conserved sequence element in the viral genomic RNA. The protein is ATP-dependent RNA helicase DDX39A (DDX39A) of Homo sapiens (Human).